Here is a 173-residue protein sequence, read N- to C-terminus: Small ribosomal subunit protein mS25 (173 aa).

It belongs to the mitochondrion-specific ribosomal protein mS25 family. Component of the mitochondrial ribosome small subunit (28S) which comprises a 12S rRNA and about 30 distinct proteins.

The protein localises to the mitochondrion. The chain is Small ribosomal subunit protein mS25 (MRPS25) from Bos taurus (Bovine).